The sequence spans 457 residues: Beta-1,4-mannosyltransferase egh (457 aa).

6 consecutive transmembrane segments (helical) span residues Leu8–Ile28, Phe35–Leu55, Phe57–Asn77, Leu346–Phe366, Val378–Ile398, and Val415–Trp435.

Belongs to the glycosyltransferase 2 family.

It is found in the membrane. In terms of biological role, glycosyltransferase with a proposed role in glycosphingolipid biosynthesis. Neurogenic protein implicated in epithelial development. Critical component of a differential oocyte-follicle cell adhesive system. The chain is Beta-1,4-mannosyltransferase egh (egh) from Drosophila melanogaster (Fruit fly).